The following is a 267-amino-acid chain: Undecaprenyl-diphosphatase (267 aa).

The next 8 helical transmembrane spans lie at 1 to 21, 39 to 59, 83 to 103, 111 to 131, 149 to 169, 189 to 209, 218 to 238, and 246 to 266; these read MTYF…FLPI, QGLA…VIYF, SNLA…GLLF, LRSA…LWWV, ALFL…RSGI, FLMS…KLAM, LLST…HFFL, and MMPF…WLAL.

It belongs to the UppP family.

The protein resides in the cell inner membrane. It catalyses the reaction di-trans,octa-cis-undecaprenyl diphosphate + H2O = di-trans,octa-cis-undecaprenyl phosphate + phosphate + H(+). Functionally, catalyzes the dephosphorylation of undecaprenyl diphosphate (UPP). Confers resistance to bacitracin. The protein is Undecaprenyl-diphosphatase of Aliivibrio fischeri (strain MJ11) (Vibrio fischeri).